A 216-amino-acid chain; its full sequence is MVGHLHLQGMEDSLKEQGREGLLDSPDSGLPPSPSPSPPFYSLAPGILDARAGGAGASSEPPGPSEARAPPSQLPNPPASEMRPRMLPVFFGESIKVNPEPTHEIRCNSEVKYASEKHFQDKVFYAPVPTVTAYSETIVAAPNCTWRNYRSQLTLEPRPRALRFRSTTIIFPKHARSTFRTTLHCSLGRPSRWFTASVQLQLCQDPAPSLLGPATL.

The tract at residues 1–83 (MVGHLHLQGM…LPNPPASEMR (83 aa)) is disordered. Over residues 12–22 (DSLKEQGREGL) the composition is skewed to basic and acidic residues. A compositionally biased stretch (pro residues) spans 29–39 (GLPPSPSPSPP). The span at 57 to 71 (ASSEPPGPSEARAPP) shows a compositional bias: low complexity. Residue arginine 163 is modified to Asymmetric dimethylarginine.

It belongs to the Refilin family. As to quaternary structure, interacts with FLNA and FLNB.

It localises to the cytoplasm. The protein localises to the cytoskeleton. Its function is as follows. Involved in the regulation of the perinuclear actin network and nuclear shape through interaction with filamins. Plays an essential role in actin cytoskeleton formation in developing cartilaginous cells. This Homo sapiens (Human) protein is Refilin-A.